Consider the following 97-residue polypeptide: Small ribosomal subunit protein bS20 (97 aa).

This sequence belongs to the bacterial ribosomal protein bS20 family.

In terms of biological role, binds directly to 16S ribosomal RNA. This Prochlorococcus marinus (strain AS9601) protein is Small ribosomal subunit protein bS20.